Reading from the N-terminus, the 267-residue chain is Phosphate import ATP-binding protein PstB 1 (267 aa).

One can recognise an ABC transporter domain in the interval 21–262; that stretch reads LETKDLHVYY…AALQSTSDYV (242 aa). ATP is bound at residue 53–60; sequence GPSGCGKS.

It belongs to the ABC transporter superfamily. Phosphate importer (TC 3.A.1.7) family. The complex is composed of two ATP-binding proteins (PstB), two transmembrane proteins (PstC and PstA) and a solute-binding protein (PstS).

It localises to the cell membrane. It catalyses the reaction phosphate(out) + ATP + H2O = ADP + 2 phosphate(in) + H(+). In terms of biological role, part of the ABC transporter complex PstSACB involved in phosphate import. Responsible for energy coupling to the transport system. The sequence is that of Phosphate import ATP-binding protein PstB 1 from Streptococcus thermophilus (strain CNRZ 1066).